The primary structure comprises 272 residues: MADS-box transcription factor 58 (272 aa).

Positions 1–41 (MHIYKEQEAEPSTGLMMPEPAPVASPGSGGSGGSGSVGAEK) are disordered. The segment covering 27-36 (GSGGSGGSGS) has biased composition (gly residues). The 61-residue stretch at 43-103 (GSRGKIEIKR…GRLYEYSNNS (61 aa)) folds into the MADS-box domain. The K-box domain maps to 129–219 (AQHYQQEAAK…KSKVAESERG (91 aa)).

In terms of tissue distribution, expressed in the lodicule, stamen carpel and ovule primordia.

Its subcellular location is the nucleus. Probable transcription factor involved in the development of floral organs. Acts as a C-class protein in association with MADS3. Involved in the control of lodicule number (whorl 2), stamen specification (whorl 3), floral meristem determinacy and regulation of the carpel morphogenesis (whorl 4). Plays a more predominant role in floral meristem determinacy than MADS3. The sequence is that of MADS-box transcription factor 58 (MADS58) from Oryza sativa subsp. japonica (Rice).